A 444-amino-acid chain; its full sequence is Putative permease IIC component YwbA (444 aa).

The 414-residue stretch at 8 to 421 folds into the PTS EIIC type-3 domain; sequence MEEKIMPVAG…LITCAIYYPF (414 aa). Helical transmembrane passes span 31–51, 72–92, 104–124, 138–158, 187–207, 223–243, 246–266, 291–311, 349–371, and 402–422; these read GIILTMPLIIIGSVFLILTSL, LGYPVNASFDIMAMIAAFGIA, LSAGAISIAAFLLATPFEVPF, GIPITLLGSKGLFVAMLIALF, FVALIPGFIIVLLVWLARLLI, LGTPLSILGGSLGGSLIAEFV, LLWSCGIHGASIIGGIMAPIW, FFQIWINVGGSGATLALVLTM, PLLIVPFIIAPLLTITATYIGMS, and SGAVMQLVNLLITCAIYYPFF.

Its subcellular location is the cell membrane. In terms of biological role, the phosphoenolpyruvate-dependent sugar phosphotransferase system (PTS), a major carbohydrate active -transport system, catalyzes the phosphorylation of incoming sugar substrates concomitant with their translocation across the cell membrane. The protein is Putative permease IIC component YwbA (ywbA) of Bacillus subtilis (strain 168).